A 159-amino-acid polypeptide reads, in one-letter code: Small heat shock protein hspM (159 aa).

The sHSP domain occupies 1–159 (MFVLNFELAG…LSNNIKIQIN (159 aa)). The interval 35–101 (MNNNNKNNLQ…NNNNKSSKTN (67 aa)) is disordered. 2 stretches are compositionally biased toward low complexity: residues 36-46 (NNNNKNNLQIN) and 61-95 (SSSS…NNNN).

The protein belongs to the small heat shock protein (HSP20) family.

The sequence is that of Small heat shock protein hspM (hspM) from Dictyostelium discoideum (Social amoeba).